A 117-amino-acid polypeptide reads, in one-letter code: Large ribosomal subunit protein bL19 (117 aa).

It belongs to the bacterial ribosomal protein bL19 family.

This protein is located at the 30S-50S ribosomal subunit interface and may play a role in the structure and function of the aminoacyl-tRNA binding site. This Vibrio parahaemolyticus serotype O3:K6 (strain RIMD 2210633) protein is Large ribosomal subunit protein bL19.